A 294-amino-acid chain; its full sequence is 4-hydroxy-tetrahydrodipicolinate synthase (294 aa).

Threonine 47 is a binding site for pyruvate. Tyrosine 135 functions as the Proton donor/acceptor in the catalytic mechanism. The Schiff-base intermediate with substrate role is filled by lysine 163. Residue valine 205 coordinates pyruvate.

The protein belongs to the DapA family. As to quaternary structure, homotetramer; dimer of dimers.

The protein resides in the cytoplasm. The enzyme catalyses L-aspartate 4-semialdehyde + pyruvate = (2S,4S)-4-hydroxy-2,3,4,5-tetrahydrodipicolinate + H2O + H(+). It functions in the pathway amino-acid biosynthesis; L-lysine biosynthesis via DAP pathway; (S)-tetrahydrodipicolinate from L-aspartate: step 3/4. Catalyzes the condensation of (S)-aspartate-beta-semialdehyde [(S)-ASA] and pyruvate to 4-hydroxy-tetrahydrodipicolinate (HTPA). This is 4-hydroxy-tetrahydrodipicolinate synthase from Rickettsia canadensis (strain McKiel).